A 619-amino-acid chain; its full sequence is 1-deoxy-D-xylulose-5-phosphate synthase (619 aa).

Thiamine diphosphate-binding positions include His74 and 115 to 117 (GHS). Position 146 (Asp146) interacts with Mg(2+). Thiamine diphosphate contacts are provided by residues 147 to 148 (GA), Asn175, Tyr285, and Glu365. Asn175 serves as a coordination point for Mg(2+).

Belongs to the transketolase family. DXPS subfamily. In terms of assembly, homodimer. The cofactor is Mg(2+). It depends on thiamine diphosphate as a cofactor.

It carries out the reaction D-glyceraldehyde 3-phosphate + pyruvate + H(+) = 1-deoxy-D-xylulose 5-phosphate + CO2. It participates in metabolic intermediate biosynthesis; 1-deoxy-D-xylulose 5-phosphate biosynthesis; 1-deoxy-D-xylulose 5-phosphate from D-glyceraldehyde 3-phosphate and pyruvate: step 1/1. In terms of biological role, catalyzes the acyloin condensation reaction between C atoms 2 and 3 of pyruvate and glyceraldehyde 3-phosphate to yield 1-deoxy-D-xylulose-5-phosphate (DXP). The protein is 1-deoxy-D-xylulose-5-phosphate synthase of Clostridium perfringens (strain 13 / Type A).